A 335-amino-acid chain; its full sequence is Pregnancy-specific beta-1-glycoprotein 5 (335 aa).

The signal sequence occupies residues 1–34; sequence MGPLSAPPCTQHITWKGLLLTASLLNFWNLPITA. In terms of domain architecture, Ig-like V-type spans 35-144; it reads QVTIEALPPK…TGYFTFNLYL (110 aa). 2 N-linked (GlcNAc...) asparagine glycosylation sites follow: asparagine 104 and asparagine 111. The short motif at 127–129 is the Cell attachment site element; it reads RGD. Ig-like C2-type domains lie at 147 to 234 and 239 to 317; these read PKPY…VTLN and PDLP…KSMT. 2 disulfide bridges follow: cysteine 169–cysteine 217 and cysteine 261–cysteine 301. N-linked (GlcNAc...) asparagine glycans are attached at residues asparagine 175 and asparagine 210.

This sequence belongs to the immunoglobulin superfamily. CEA family. Synthesized by syncytiotrophoblast of the placenta.

Its subcellular location is the secreted. This Homo sapiens (Human) protein is Pregnancy-specific beta-1-glycoprotein 5 (PSG5).